The following is a 616-amino-acid chain: Methylmalonyl-CoA mutase small subunit (616 aa).

It belongs to the methylmalonyl-CoA mutase family. As to quaternary structure, heterodimer of an alpha and a beta chain. It depends on adenosylcob(III)alamin as a cofactor.

The enzyme catalyses (R)-methylmalonyl-CoA = succinyl-CoA. It participates in metabolic intermediate metabolism; propanoyl-CoA degradation; succinyl-CoA from propanoyl-CoA: step 3/3. Its function is as follows. Catalyzes the isomerization of succinyl-CoA to methylmalonyl-CoA during synthesis of propionate from tricarboxylic acid-cycle intermediates. This conversion most likely represents an important source of building blocks for polyketide antibiotic biosynthesis. It is unable to catalyze the conversion of isobutyryl-CoA into N-butyryl-CoA. This is Methylmalonyl-CoA mutase small subunit (mutA) from Streptomyces virginiae (Streptomyces cinnamonensis).